The following is a 370-amino-acid chain: Versatile peroxidase VPS1 (370 aa).

The signal sequence occupies residues 1 to 20; it reads MAFAKLSAFVLALGATVALG. Residues 21 to 31 constitute a propeptide that is removed on maturation; the sequence is ESPTHRCLNKR. 4 cysteine pairs are disulfide-bonded: cysteine 34/cysteine 46, cysteine 45/cysteine 315, cysteine 65/cysteine 151, and cysteine 279/cysteine 344. Mn(2+)-binding residues include glutamate 67 and glutamate 71. Histidine 78 functions as the Proton acceptor in the catalytic mechanism. The Ca(2+) site is built by aspartate 79, glycine 97, aspartate 99, and serine 101. An N-linked (GlcNAc...) asparagine glycan is attached at asparagine 133. Tryptophan 201 functions as the Tryptophan radical intermediate in the catalytic mechanism. Heme b is bound at residue histidine 206. Position 207 (threonine 207) interacts with Ca(2+). 210 to 214 lines the heme b pocket; the sequence is AADHV. Residue aspartate 212 participates in Mn(2+) binding. Ca(2+) contacts are provided by aspartate 224, threonine 226, threonine 229, and aspartate 231.

It belongs to the peroxidase family. Ligninase subfamily. Requires heme b as cofactor. Ca(2+) serves as cofactor.

The protein localises to the secreted. The catalysed reaction is 1-(4-hydroxy-3-methoxyphenyl)-2-(2-methoxyphenoxy)propane-1,3-diol + H2O2 = guaiacol + vanillin + glycolaldehyde + H2O. It catalyses the reaction 2 Mn(2+) + H2O2 + 2 H(+) = 2 Mn(3+) + 2 H2O. Its function is as follows. A versatile ligninolytic peroxidase that combines the substrate specificity characteristics of the two other ligninolytic peroxidases, manganese peroxidase and lignin peroxidase. In Pleurotus eryngii (Boletus of the steppes), this protein is Versatile peroxidase VPS1 (vps1).